Here is an 890-residue protein sequence, read N- to C-terminus: MKSLHWFLHLLIIAFTVLRSVEAQNQAGFISLDCGLVPKETTYTEKSTNITYKSDVDYIDSGLVGKINDAYKTQFQQQVWAVRSFPVGQRNCYNVNLTANNKYLIRGTFVYGNYDGLNQFPSFDLHIGPNKWSSVKILGVTNTSMHEIIHVVPQDSLEVCLVKTGPTTPFISSLEVRPLNNESYLTQSGSLMLFARVYFPSSSSSFIRYDEDIHDRVWNSFTDDETVWISTDLPIDTSNSYDMPQSVMKTAAVPKNASEPWLLWWTLDENTAQSYVYMHFAEVQNLTANETREFNITYNGGLRWFSYLRPPNLSISTIFNPRAVSSSNGIFNFTFAMTGNSTLPPLLNALEIYTVVDILQLETNKDEVSAMMNIKETYGLSKKISWQGDPCAPQLYRWEGLNCSYPDSEGSRIISLNLNGSELTGSITSDISKLTLLTVLDLSNNDLSGDIPTFFAEMKSLKLINLSGNPNLNLTAIPDSLQQRVNSKSLTLILGENLTLTPKKESKKVPMVAIAASVAGVFALLVILAIFFVIKRKNVKAHKSPGPPPLVTPGIVKSETRSSNPSIITRERKITYPEVLKMTNNFERVLGKGGFGTVYHGNLDGAEVAVKMLSHSSAQGYKEFKAEVELLLRVHHRHLVGLVGYCDDGDNLALIYEYMANGDLRENMSGKRGGNVLTWENRMQIAVEAAQGLEYLHNGCRPPMVHRDVKTTNILLNERCGAKLADFGLSRSFPIDGECHVSTVVAGTPGYLDPEYYRTNWLSEKSDVYSFGVVLLEIVTNQPVIDKTRERPHINDWVGFMLTKGDIKSIVDPKLMGDYDTNGAWKIVELALACVNPSSNRRPTMAHVVMELNDCVALENARRQGSEEMYSMGSVDYSLSSTSDFAPGAR.

An N-terminal signal peptide occupies residues 1–23; the sequence is MKSLHWFLHLLIIAFTVLRSVEA. Residues 24 to 513 lie on the Extracellular side of the membrane; that stretch reads QNQAGFISLD…KESKKVPMVA (490 aa). 13 N-linked (GlcNAc...) asparagine glycosylation sites follow: Asn-49, Asn-96, Asn-142, Asn-181, Asn-256, Asn-285, Asn-289, Asn-295, Asn-312, Asn-332, Asn-340, Asn-402, and Asn-419. 3 LRR repeats span residues 412–435, 436–458, and 460–481; these read RIISLNLNGSELTGSITSDISKLT, LLTVLDLSNNDLSGDIPTFFAEM, and SLKLINLSGNPNLNLTAIPDSL. Residues Asn-465, Asn-473, and Asn-497 are each glycosylated (N-linked (GlcNAc...) asparagine). Residues 514–534 form a helical membrane-spanning segment; the sequence is IAASVAGVFALLVILAIFFVI. Topologically, residues 535–890 are cytoplasmic; sequence KRKNVKAHKS…STSDFAPGAR (356 aa). Thr-575 bears the Phosphothreonine mark. Residues 584 to 856 enclose the Protein kinase domain; that stretch reads NNFERVLGKG…HVVMELNDCV (273 aa). ATP is bound by residues 590-598 and Lys-611; that span reads LGKGGFGTV. Tyr-656 carries the phosphotyrosine modification. Asp-708 serves as the catalytic Proton acceptor. The residue at position 742 (Ser-742) is a Phosphoserine. Residues Thr-743 and Thr-748 each carry the phosphothreonine modification. Tyr-756 is modified (phosphotyrosine).

This sequence belongs to the protein kinase superfamily. Ser/Thr protein kinase family.

It is found in the membrane. It catalyses the reaction L-seryl-[protein] + ATP = O-phospho-L-seryl-[protein] + ADP + H(+). The catalysed reaction is L-threonyl-[protein] + ATP = O-phospho-L-threonyl-[protein] + ADP + H(+). The polypeptide is Probable LRR receptor-like serine/threonine-protein kinase At1g51860 (Arabidopsis thaliana (Mouse-ear cress)).